A 966-amino-acid polypeptide reads, in one-letter code: Alanine--tRNA ligase, cytoplasmic (966 aa).

Zn(2+) is bound by residues histidine 604, histidine 608, cysteine 723, and histidine 727.

This sequence belongs to the class-II aminoacyl-tRNA synthetase family. In terms of assembly, monomer. Requires Zn(2+) as cofactor.

It is found in the cytoplasm. It catalyses the reaction tRNA(Ala) + L-alanine + ATP = L-alanyl-tRNA(Ala) + AMP + diphosphate. Functionally, catalyzes the attachment of alanine to tRNA(Ala) in a two-step reaction: alanine is first activated by ATP to form Ala-AMP and then transferred to the acceptor end of tRNA(Ala). Also edits incorrectly charged tRNA(Ala) via its editing domain. The sequence is that of Alanine--tRNA ligase, cytoplasmic from Drosophila melanogaster (Fruit fly).